We begin with the raw amino-acid sequence, 428 residues long: Glutamyl-tRNA reductase (428 aa).

Substrate is bound by residues 55 to 58 (TCNR), Ser-114, 119 to 121 (ETQ), and Gln-125. The active-site Nucleophile is Cys-56. 194-199 (GAGEMI) contributes to the NADP(+) binding site.

The protein belongs to the glutamyl-tRNA reductase family. In terms of assembly, homodimer.

It carries out the reaction (S)-4-amino-5-oxopentanoate + tRNA(Glu) + NADP(+) = L-glutamyl-tRNA(Glu) + NADPH + H(+). It participates in porphyrin-containing compound metabolism; protoporphyrin-IX biosynthesis; 5-aminolevulinate from L-glutamyl-tRNA(Glu): step 1/2. Its function is as follows. Catalyzes the NADPH-dependent reduction of glutamyl-tRNA(Glu) to glutamate 1-semialdehyde (GSA). This is Glutamyl-tRNA reductase from Paraburkholderia phytofirmans (strain DSM 17436 / LMG 22146 / PsJN) (Burkholderia phytofirmans).